Consider the following 354-residue polypeptide: MNKKILFTGGGTAGHVMINMVLIPKFMGKGWGVEYIGSQNGIEKLLVQNVKYNSISTGKLRRYWDWENFKDPFKIIKGCIQSYKLMKRIKPDVIFSAGGFVSVPVVIGAWMNKVPVIIREPDSTLGLANKIALPFTTKLCTTFPQTGENVSNEKKVYVGPIVREEIERGNVLRGRSYCKFQQDKPVLLIMGGSQGAQWINDMVRGSLETLLLNFNIVHMCGKGKVDSSIGMEGYIQFEYIGEELPHILNMASVVVSRAGSTAIFELLFLKKPMLLIPLTNSSSRGDQVLNAEYFSRQGYAEVILQDRVSTNTFIHAVNKLNTNKERYIQNMNGYTKTNDEGIHQLIDIINEVVK.

Residues 12-14 (TAG), Arg163, Ser193, and Gln287 each bind UDP-N-acetyl-alpha-D-glucosamine.

Belongs to the glycosyltransferase 28 family. MurG subfamily.

It is found in the cell membrane. The enzyme catalyses di-trans,octa-cis-undecaprenyl diphospho-N-acetyl-alpha-D-muramoyl-L-alanyl-D-glutamyl-meso-2,6-diaminopimeloyl-D-alanyl-D-alanine + UDP-N-acetyl-alpha-D-glucosamine = di-trans,octa-cis-undecaprenyl diphospho-[N-acetyl-alpha-D-glucosaminyl-(1-&gt;4)]-N-acetyl-alpha-D-muramoyl-L-alanyl-D-glutamyl-meso-2,6-diaminopimeloyl-D-alanyl-D-alanine + UDP + H(+). It participates in cell wall biogenesis; peptidoglycan biosynthesis. Functionally, cell wall formation. Catalyzes the transfer of a GlcNAc subunit on undecaprenyl-pyrophosphoryl-MurNAc-pentapeptide (lipid intermediate I) to form undecaprenyl-pyrophosphoryl-MurNAc-(pentapeptide)GlcNAc (lipid intermediate II). This is UDP-N-acetylglucosamine--N-acetylmuramyl-(pentapeptide) pyrophosphoryl-undecaprenol N-acetylglucosamine transferase 1 from Bacillus thuringiensis (strain Al Hakam).